The primary structure comprises 780 residues: ATP-dependent 6-phosphofructokinase, muscle type (780 aa).

An N-acetylthreonine modification is found at Thr-2. Residues Thr-2–His-390 form an N-terminal catalytic PFK domain 1 region. Residues Gly-25, Arg-88–Cys-89, and Gly-118–Ser-121 each bind ATP. Asp-119 contacts Mg(2+). Residue Ser-133 is modified to Phosphoserine. Substrate is bound by residues Ser-164–Asp-166, Arg-201, Met-208–Arg-210, Glu-264, Arg-292, and His-298–Arg-301. The active-site Proton acceptor is Asp-166. A Phosphoserine modification is found at Ser-377. The interval Ile-391–His-401 is interdomain linker. A C-terminal regulatory PFK domain 2 region spans residues Thr-402–Ala-780. Beta-D-fructose 2,6-bisphosphate-binding positions include Arg-471 and Thr-528 to Asn-532. Ser-530 is a glycosylation site (O-linked (GlcNAc) serine). Lys-557 is modified (N6-(2-hydroxyisobutyryl)lysine). Residues Arg-566, Met-573–Gly-575, Glu-629, Arg-655, and His-661–Gln-664 contribute to the beta-D-fructose 2,6-bisphosphate site. The residue at position 667 (Ser-667) is a Phosphoserine. Arg-735 is a binding site for beta-D-fructose 2,6-bisphosphate. Residue Ser-775 is modified to Phosphoserine.

Belongs to the phosphofructokinase type A (PFKA) family. ATP-dependent PFK group I subfamily. Eukaryotic two domain clade 'E' sub-subfamily. As to quaternary structure, homo- and heterotetramers. Phosphofructokinase (PFK) enzyme functions as a tetramer composed of different combinations of 3 types of subunits, called PFKM (M), PFKL (L) and PFKP (P). The composition of the PFK tetramer differs according to the tissue type it is present in. The kinetic and regulatory properties of the tetrameric enzyme are dependent on the subunit composition, hence can vary across tissues. Interacts (via C-terminus) with HK1 (via N-terminal spermatogenic cell-specific region). Mg(2+) serves as cofactor. GlcNAcylation decreases enzyme activity.

Its subcellular location is the cytoplasm. It catalyses the reaction beta-D-fructose 6-phosphate + ATP = beta-D-fructose 1,6-bisphosphate + ADP + H(+). The protein operates within carbohydrate degradation; glycolysis; D-glyceraldehyde 3-phosphate and glycerone phosphate from D-glucose: step 3/4. Its activity is regulated as follows. Allosterically activated by ADP, AMP, or fructose 2,6-bisphosphate, and allosterically inhibited by ATP or citrate. Functionally, catalyzes the phosphorylation of D-fructose 6-phosphate to fructose 1,6-bisphosphate by ATP, the first committing step of glycolysis. The chain is ATP-dependent 6-phosphofructokinase, muscle type (PFKM) from Equus caballus (Horse).